A 174-amino-acid polypeptide reads, in one-letter code: Adenine phosphoribosyltransferase (174 aa).

This sequence belongs to the purine/pyrimidine phosphoribosyltransferase family. As to quaternary structure, homodimer.

The protein resides in the cytoplasm. It carries out the reaction AMP + diphosphate = 5-phospho-alpha-D-ribose 1-diphosphate + adenine. It participates in purine metabolism; AMP biosynthesis via salvage pathway; AMP from adenine: step 1/1. Its function is as follows. Catalyzes a salvage reaction resulting in the formation of AMP, that is energically less costly than de novo synthesis. This chain is Adenine phosphoribosyltransferase, found in Dichelobacter nodosus (strain VCS1703A).